The sequence spans 474 residues: Coiled-coil domain-containing protein 174 (474 aa).

2 disordered regions span residues Gly-39–Leu-86 and Gly-129–Glu-170. Composition is skewed to basic and acidic residues over residues Arg-64–Leu-86 and Gly-129–Ala-142. Residues Arg-64–Lys-98 are a coiled coil. Residues Asn-148 to Ser-157 are compositionally biased toward acidic residues. At Ser-206 the chain carries Phosphoserine. Residues Leu-276–Lys-317 are a coiled coil. Disordered regions lie at residues Arg-309–Trp-372 and Glu-389–Gln-461. 2 stretches are compositionally biased toward basic and acidic residues: residues Ser-316–Ala-327 and Ile-356–Trp-372. Residues Arg-410–Trp-419 are compositionally biased toward polar residues. Residues Gly-430–Pro-453 are compositionally biased toward low complexity.

It localises to the nucleus. Functionally, probably involved in neuronal development. This Rattus norvegicus (Rat) protein is Coiled-coil domain-containing protein 174 (Ccdc174).